The sequence spans 178 residues: Small ribosomal subunit protein uS4 (178 aa).

The 63-residue stretch at 104-166 (RRLQTIVYRK…PNSPMASENH (63 aa)) folds into the S4 RNA-binding domain. The tract at residues 158 to 178 (NSPMASENHPERTAAVSEENQ) is disordered.

Belongs to the universal ribosomal protein uS4 family. Part of the 30S ribosomal subunit. Contacts protein S5. The interaction surface between S4 and S5 is involved in control of translational fidelity.

In terms of biological role, one of the primary rRNA binding proteins, it binds directly to 16S rRNA where it nucleates assembly of the body of the 30S subunit. Functionally, with S5 and S12 plays an important role in translational accuracy. The chain is Small ribosomal subunit protein uS4 from Methanococcus maripaludis (strain C6 / ATCC BAA-1332).